A 168-amino-acid polypeptide reads, in one-letter code: Segregation and condensation protein B (168 aa).

The protein belongs to the ScpB family. Homodimer. Homodimerization may be required to stabilize the binding of ScpA to the Smc head domains. Component of a cohesin-like complex composed of ScpA, ScpB and the Smc homodimer, in which ScpA and ScpB bind to the head domain of Smc. The presence of the three proteins is required for the association of the complex with DNA.

It localises to the cytoplasm. Functionally, participates in chromosomal partition during cell division. May act via the formation of a condensin-like complex containing Smc and ScpA that pull DNA away from mid-cell into both cell halves. This Caldanaerobacter subterraneus subsp. tengcongensis (strain DSM 15242 / JCM 11007 / NBRC 100824 / MB4) (Thermoanaerobacter tengcongensis) protein is Segregation and condensation protein B.